The following is a 152-amino-acid chain: Large ribosomal subunit protein uL11 (152 aa).

Belongs to the universal ribosomal protein uL11 family. In terms of assembly, part of the ribosomal stalk of the 50S ribosomal subunit. Interacts with L10 and the large rRNA to form the base of the stalk. L10 forms an elongated spine to which L12 dimers bind in a sequential fashion forming a multimeric L10(L12)X complex. In terms of processing, one or more lysine residues are methylated.

Forms part of the ribosomal stalk which helps the ribosome interact with GTP-bound translation factors. This Mycoplasmoides gallisepticum (strain R(low / passage 15 / clone 2)) (Mycoplasma gallisepticum) protein is Large ribosomal subunit protein uL11.